A 418-amino-acid polypeptide reads, in one-letter code: Isocitrate dehydrogenase [NADP] (418 aa).

Residue Thr106 participates in NADP(+) binding. D-threo-isocitrate-binding residues include Ser115, Asn117, Arg121, Arg131, and Arg155. A Phosphoserine modification is found at Ser115. Residue Thr193 is modified to Phosphothreonine. Asp309 is a binding site for Mg(2+). NADP(+)-binding positions include 341–347, Asn354, Tyr393, and Arg397; that span reads HGTAPKY.

This sequence belongs to the isocitrate and isopropylmalate dehydrogenases family. As to quaternary structure, homodimer. It depends on Mg(2+) as a cofactor. Requires Mn(2+) as cofactor.

Its subcellular location is the secreted. It catalyses the reaction D-threo-isocitrate + NADP(+) = 2-oxoglutarate + CO2 + NADPH. Catalyzes the oxidative decarboxylation of isocitrate to 2-oxoglutarate and carbon dioxide with the concomitant reduction of NADP(+). The sequence is that of Isocitrate dehydrogenase [NADP] (icd) from Pseudomonas aeruginosa (strain UCBPP-PA14).